The primary structure comprises 370 residues: Cytochrome b (370 aa).

Transmembrane regions (helical) follow at residues 25 to 45 (FGSM…FLAV), 69 to 90 (WLMQ…YIHI), 105 to 125 (WLSG…GYVL), and 170 to 190 (FFAL…LHVM). 2 residues coordinate heme b: H75 and H89. Positions 174 and 188 each coordinate heme b. H193 provides a ligand contact to a ubiquinone. 4 helical membrane passes run 218 to 238 (YKDL…VSFS), 280 to 300 (LGGA…PFTH), 312 to 332 (FMQM…WTAT), and 339 to 358 (FTLI…ISNP).

This sequence belongs to the cytochrome b family. The cytochrome bc1 complex contains 3 respiratory subunits (MT-CYB, CYC1 and UQCRFS1), 2 core proteins (UQCRC1 and UQCRC2) and probably 6 low-molecular weight proteins. Heme b serves as cofactor.

It is found in the mitochondrion inner membrane. Its function is as follows. Component of the ubiquinol-cytochrome c reductase complex (complex III or cytochrome b-c1 complex) that is part of the mitochondrial respiratory chain. The b-c1 complex mediates electron transfer from ubiquinol to cytochrome c. Contributes to the generation of a proton gradient across the mitochondrial membrane that is then used for ATP synthesis. This chain is Cytochrome b (MT-CYB), found in Eunectes notaeus (Yellow anaconda).